The following is a 358-amino-acid chain: Protein RecA (358 aa).

ATP is bound at residue 67-74 (GPESSGKT).

The protein belongs to the RecA family.

It localises to the cytoplasm. Functionally, can catalyze the hydrolysis of ATP in the presence of single-stranded DNA, the ATP-dependent uptake of single-stranded DNA by duplex DNA, and the ATP-dependent hybridization of homologous single-stranded DNAs. It interacts with LexA causing its activation and leading to its autocatalytic cleavage. The protein is Protein RecA of Xenorhabdus nematophila (strain ATCC 19061 / DSM 3370 / CCUG 14189 / LMG 1036 / NCIMB 9965 / AN6).